Consider the following 96-residue polypeptide: Aspartyl/glutamyl-tRNA(Asn/Gln) amidotransferase subunit C (96 aa).

It belongs to the GatC family. As to quaternary structure, heterotrimer of A, B and C subunits.

It carries out the reaction L-glutamyl-tRNA(Gln) + L-glutamine + ATP + H2O = L-glutaminyl-tRNA(Gln) + L-glutamate + ADP + phosphate + H(+). The enzyme catalyses L-aspartyl-tRNA(Asn) + L-glutamine + ATP + H2O = L-asparaginyl-tRNA(Asn) + L-glutamate + ADP + phosphate + 2 H(+). In terms of biological role, allows the formation of correctly charged Asn-tRNA(Asn) or Gln-tRNA(Gln) through the transamidation of misacylated Asp-tRNA(Asn) or Glu-tRNA(Gln) in organisms which lack either or both of asparaginyl-tRNA or glutaminyl-tRNA synthetases. The reaction takes place in the presence of glutamine and ATP through an activated phospho-Asp-tRNA(Asn) or phospho-Glu-tRNA(Gln). The sequence is that of Aspartyl/glutamyl-tRNA(Asn/Gln) amidotransferase subunit C from Oceanobacillus iheyensis (strain DSM 14371 / CIP 107618 / JCM 11309 / KCTC 3954 / HTE831).